The chain runs to 400 residues: Phosphoglycerate kinase (400 aa).

Substrate contacts are provided by residues 21 to 23 (DFN), Arg36, 59 to 62 (HLGR), Arg118, and Arg151. Residues Lys201, Gly293, Glu324, and 353-356 (GGDS) contribute to the ATP site.

The protein belongs to the phosphoglycerate kinase family. Monomer.

The protein localises to the cytoplasm. It carries out the reaction (2R)-3-phosphoglycerate + ATP = (2R)-3-phospho-glyceroyl phosphate + ADP. Its pathway is carbohydrate degradation; glycolysis; pyruvate from D-glyceraldehyde 3-phosphate: step 2/5. The protein is Phosphoglycerate kinase of Fervidobacterium nodosum (strain ATCC 35602 / DSM 5306 / Rt17-B1).